The following is a 469-amino-acid chain: 3-isopropylmalate dehydratase large subunit (469 aa).

[4Fe-4S] cluster contacts are provided by C347, C408, and C411.

It belongs to the aconitase/IPM isomerase family. LeuC type 1 subfamily. In terms of assembly, heterodimer of LeuC and LeuD. It depends on [4Fe-4S] cluster as a cofactor.

It catalyses the reaction (2R,3S)-3-isopropylmalate = (2S)-2-isopropylmalate. Its pathway is amino-acid biosynthesis; L-leucine biosynthesis; L-leucine from 3-methyl-2-oxobutanoate: step 2/4. Its function is as follows. Catalyzes the isomerization between 2-isopropylmalate and 3-isopropylmalate, via the formation of 2-isopropylmaleate. The sequence is that of 3-isopropylmalate dehydratase large subunit from Haemophilus influenzae (strain 86-028NP).